An 873-amino-acid polypeptide reads, in one-letter code: Bifunctional uridylyltransferase/uridylyl-removing enzyme (873 aa).

The uridylyltransferase stretch occupies residues 1–332 (MAFQSPLTFN…NGGETEPAVI (332 aa)). Residues 333-692 (INEDFQRRGR…MSKKATRGGT (360 aa)) are uridylyl-removing. In terms of domain architecture, HD spans 451-573 (VDEHSVRLLN…VRDEERLEYL (123 aa)). ACT domains lie at 693 to 773 (EVFV…VKTR) and 800 to 873 (LMEL…ELAP).

This sequence belongs to the GlnD family. The cofactor is Mg(2+).

It catalyses the reaction [protein-PII]-L-tyrosine + UTP = [protein-PII]-uridylyl-L-tyrosine + diphosphate. The catalysed reaction is [protein-PII]-uridylyl-L-tyrosine + H2O = [protein-PII]-L-tyrosine + UMP + H(+). Its activity is regulated as follows. Uridylyltransferase (UTase) activity is inhibited by glutamine, while glutamine activates uridylyl-removing (UR) activity. Functionally, modifies, by uridylylation and deuridylylation, the PII regulatory proteins (GlnB and homologs), in response to the nitrogen status of the cell that GlnD senses through the glutamine level. Under low glutamine levels, catalyzes the conversion of the PII proteins and UTP to PII-UMP and PPi, while under higher glutamine levels, GlnD hydrolyzes PII-UMP to PII and UMP (deuridylylation). Thus, controls uridylylation state and activity of the PII proteins, and plays an important role in the regulation of nitrogen assimilation and metabolism. This Vibrio vulnificus (strain CMCP6) protein is Bifunctional uridylyltransferase/uridylyl-removing enzyme.